The sequence spans 214 residues: Rac-like GTP-binding protein 3 (214 aa).

15 to 22 provides a ligand contact to GTP; that stretch reads GDGAVGKT. The Effector region motif lies at 37–45; it reads YIPTVFDNF. GTP-binding positions include 62 to 66 and 120 to 123; these read DTAGQ and TKLD.

The protein belongs to the small GTPase superfamily. Rho family. Post-translationally, may be palmitoylated.

It is found in the cytoplasm. It localises to the membrane. Inactive GDP-bound Rho GTPases reside in the cytosol, are found in a complex with Rho GDP-dissociation inhibitors (Rho GDIs), and are released from the GDI protein in order to translocate to membranes upon activation. The chain is Rac-like GTP-binding protein 3 (RAC3) from Oryza sativa subsp. japonica (Rice).